Here is an 84-residue protein sequence, read N- to C-terminus: NAD(P)H-quinone oxidoreductase subunit O (84 aa).

The protein belongs to the complex I NdhO subunit family. In terms of assembly, NDH-1 can be composed of about 15 different subunits; different subcomplexes with different compositions have been identified which probably have different functions.

It is found in the cellular thylakoid membrane. The catalysed reaction is a plastoquinone + NADH + (n+1) H(+)(in) = a plastoquinol + NAD(+) + n H(+)(out). It catalyses the reaction a plastoquinone + NADPH + (n+1) H(+)(in) = a plastoquinol + NADP(+) + n H(+)(out). NDH-1 shuttles electrons from an unknown electron donor, via FMN and iron-sulfur (Fe-S) centers, to quinones in the respiratory and/or the photosynthetic chain. The immediate electron acceptor for the enzyme in this species is believed to be plastoquinone. Couples the redox reaction to proton translocation, and thus conserves the redox energy in a proton gradient. Cyanobacterial NDH-1 also plays a role in inorganic carbon-concentration. This is NAD(P)H-quinone oxidoreductase subunit O from Synechococcus sp. (strain CC9902).